Reading from the N-terminus, the 161-residue chain is DNA endonuclease I-CvuI (161 aa).

The protein belongs to the LAGLIDADG endonuclease family.

The protein resides in the plastid. Its subcellular location is the chloroplast. Its function is as follows. Probable endonuclease involved in intron homing. The sequence is that of DNA endonuclease I-CvuI from Chlorella vulgaris (Green alga).